Reading from the N-terminus, the 68-residue chain is Large ribosomal subunit protein uL30 (68 aa).

Belongs to the universal ribosomal protein uL30 family. Part of the 50S ribosomal subunit.

In Agrobacterium fabrum (strain C58 / ATCC 33970) (Agrobacterium tumefaciens (strain C58)), this protein is Large ribosomal subunit protein uL30.